Here is a 127-residue protein sequence, read N- to C-terminus: MRHRKSGRHLNRTSSHRHAMFKNMCVSLVEHEVIKTTLPKAKELRRHIEPLITLAKQDSVANRRLAFNRTRSKEAVGKLFNELGPRYVERPGGYVRILKCGFRAGDNAPMAYVELVDRPVVEEAAEE.

It belongs to the bacterial ribosomal protein bL17 family. Part of the 50S ribosomal subunit. Contacts protein L32.

The polypeptide is Large ribosomal subunit protein bL17 (Chromohalobacter salexigens (strain ATCC BAA-138 / DSM 3043 / CIP 106854 / NCIMB 13768 / 1H11)).